A 390-amino-acid polypeptide reads, in one-letter code: Formate-dependent phosphoribosylglycinamide formyltransferase (390 aa).

Residues 19-20 (EL) and E79 each bind N(1)-(5-phospho-beta-D-ribosyl)glycinamide. Residues R111, K152, 157–162 (SSGKGQ), 192–195 (EGFV), and E200 each bind ATP. The region spanning 116 to 305 (RLAAEELGLP…EFAIHARAIL (190 aa)) is the ATP-grasp domain. Mg(2+) is bound by residues E264 and E276. N(1)-(5-phospho-beta-D-ribosyl)glycinamide-binding positions include D283, K353, and 360-361 (RR).

The protein belongs to the PurK/PurT family. As to quaternary structure, homodimer.

It carries out the reaction N(1)-(5-phospho-beta-D-ribosyl)glycinamide + formate + ATP = N(2)-formyl-N(1)-(5-phospho-beta-D-ribosyl)glycinamide + ADP + phosphate + H(+). It participates in purine metabolism; IMP biosynthesis via de novo pathway; N(2)-formyl-N(1)-(5-phospho-D-ribosyl)glycinamide from N(1)-(5-phospho-D-ribosyl)glycinamide (formate route): step 1/1. In terms of biological role, involved in the de novo purine biosynthesis. Catalyzes the transfer of formate to 5-phospho-ribosyl-glycinamide (GAR), producing 5-phospho-ribosyl-N-formylglycinamide (FGAR). Formate is provided by PurU via hydrolysis of 10-formyl-tetrahydrofolate. This chain is Formate-dependent phosphoribosylglycinamide formyltransferase, found in Marinobacter nauticus (strain ATCC 700491 / DSM 11845 / VT8) (Marinobacter aquaeolei).